The following is a 240-amino-acid chain: 45 kDa antigen (240 aa).

2 consecutive Fibronectin type-III domains span residues 1-109 and 110-210; these read EFPD…FHTL and ANGT…KSGH.

The sequence is that of 45 kDa antigen from Taenia ovis (Sheep tapeworm).